The chain runs to 188 residues: dTTP/UTP pyrophosphatase (188 aa).

Residue Asp67 is the Proton acceptor of the active site.

This sequence belongs to the Maf family. YhdE subfamily. The cofactor is a divalent metal cation.

It localises to the cytoplasm. The enzyme catalyses dTTP + H2O = dTMP + diphosphate + H(+). The catalysed reaction is UTP + H2O = UMP + diphosphate + H(+). In terms of biological role, nucleoside triphosphate pyrophosphatase that hydrolyzes dTTP and UTP. May have a dual role in cell division arrest and in preventing the incorporation of modified nucleotides into cellular nucleic acids. In Roseobacter denitrificans (strain ATCC 33942 / OCh 114) (Erythrobacter sp. (strain OCh 114)), this protein is dTTP/UTP pyrophosphatase.